The sequence spans 275 residues: F420-dependent methylenetetrahydromethanopterin dehydrogenase (275 aa).

Belongs to the MTD family.

The catalysed reaction is 5,10-methylenetetrahydromethanopterin + oxidized coenzyme F420-(gamma-L-Glu)(n) + 2 H(+) = 5,10-methenyl-5,6,7,8-tetrahydromethanopterin + reduced coenzyme F420-(gamma-L-Glu)(n). Its pathway is one-carbon metabolism; methanogenesis from CO(2); 5,10-methylene-5,6,7,8-tetrahydromethanopterin from 5,10-methenyl-5,6,7,8-tetrahydromethanopterin (coenzyme F420 route): step 1/1. Its function is as follows. Catalyzes the reversible reduction of methenyl-H(4)MPT(+) to methylene-H(4)MPT. The sequence is that of F420-dependent methylenetetrahydromethanopterin dehydrogenase from Methanobrevibacter smithii (strain ATCC 35061 / DSM 861 / OCM 144 / PS).